Consider the following 147-residue polypeptide: UPF0178 protein CV_1768 (147 aa).

This sequence belongs to the UPF0178 family.

The chain is UPF0178 protein CV_1768 from Chromobacterium violaceum (strain ATCC 12472 / DSM 30191 / JCM 1249 / CCUG 213 / NBRC 12614 / NCIMB 9131 / NCTC 9757 / MK).